Reading from the N-terminus, the 400-residue chain is Keratin, type I cytoskeletal 19 (400 aa).

Residues 1 to 79 (MTSYSYRQSS…TASDGLLAGN (79 aa)) form a head region. Arg7 carries the post-translational modification Omega-N-methylarginine. 2 positions are modified to phosphoserine: Ser14 and Ser22. At Arg24 the chain carries Asymmetric dimethylarginine; alternate. The residue at position 24 (Arg24) is an Omega-N-methylarginine; alternate. Position 32 is an omega-N-methylarginine (Arg32). A phosphoserine mark is found at Ser35 and Ser40. Omega-N-methylarginine is present on residues Arg43 and Arg51. Ser57 and Ser72 each carry phosphoserine. A coil 1A region spans residues 80–115 (EKLTMQNLNDRLASYLDKVRALEAANGELEVKIRDW). Positions 80–391 (EKLTMQNLND…SLLEGQEDHY (312 aa)) constitute an IF rod domain. The linker 1 stretch occupies residues 116 to 133 (YQKQGPGPSRDYSHYYTT). The segment at 134–225 (IQDLRDKILG…KNHEEEISTL (92 aa)) is coil 1B. The segment at 226 to 248 (RGQVGGQVSVEVDSAPGTDLAKI) is linker 12. The tract at residues 244–390 (DLAKILSDMR…RSLLEGQEDH (147 aa)) is necessary for interaction with PNN. The coil 2 stretch occupies residues 249–387 (LSDMRSQYEV…ATYRSLLEGQ (139 aa)). A Phosphothreonine modification is found at Thr323. A rod-like helical tail region spans residues 388-400 (EDHYSNLSASKVL). Tyr391 is modified (phosphotyrosine). Ser395 carries the phosphoserine modification.

This sequence belongs to the intermediate filament family. Heterotetramer of two type I and two type II keratins. Interacts with PNN and the actin-binding domain of DMD.

Functionally, involved in the organization of myofibers. Together with KRT8, helps to link the contractile apparatus to dystrophin at the costameres of striated muscle. The polypeptide is Keratin, type I cytoskeletal 19 (Pongo abelii (Sumatran orangutan)).